A 410-amino-acid polypeptide reads, in one-letter code: Peptidase T (410 aa).

Zn(2+) is bound at residue histidine 77. The active site involves aspartate 79. Aspartate 140 contributes to the Zn(2+) binding site. The active-site Proton acceptor is the glutamate 174. Residues glutamate 175, aspartate 197, and histidine 379 each contribute to the Zn(2+) site.

The protein belongs to the peptidase M20B family. Requires Zn(2+) as cofactor.

The protein resides in the cytoplasm. The catalysed reaction is Release of the N-terminal residue from a tripeptide.. In terms of biological role, cleaves the N-terminal amino acid of tripeptides. This chain is Peptidase T, found in Desulfitobacterium hafniense (strain DSM 10664 / DCB-2).